The chain runs to 395 residues: Axin-like protein 1 (395 aa).

In terms of domain architecture, RGS spans 4-132 (RSKTFSDRIL…TTTADVSNTW (129 aa)). The disordered stretch occupies residues 190-230 (QETKNSSETEEEKKKERSADPYGSDGFAPPPQSTQTHTLRN). Over residues 194-208 (NSSETEEEKKKERSA) the composition is skewed to basic and acidic residues. The 86-residue stretch at 301 to 386 (EIQKLTVELR…RITAICRMCP (86 aa)) folds into the DIX domain.

Interacts with bar-1, dsh-2, gsk-3, and mig-5.

Its function is as follows. Works in parallel with pry-1 in negatively regulating bar-1 signaling in vulval precursor cells and Q neuroblasts. Shown to have a role in excretory cell development. This is Axin-like protein 1 (axl-1) from Caenorhabditis briggsae.